A 195-amino-acid polypeptide reads, in one-letter code: Molybdenum cofactor guanylyltransferase (195 aa).

GTP-binding positions include 10–12, lysine 23, asparagine 51, aspartate 69, and aspartate 99; that span reads LAG. Aspartate 99 contacts Mg(2+).

This sequence belongs to the MobA family. In terms of assembly, monomer. Requires Mg(2+) as cofactor.

It localises to the cytoplasm. The enzyme catalyses Mo-molybdopterin + GTP + H(+) = Mo-molybdopterin guanine dinucleotide + diphosphate. Its function is as follows. Transfers a GMP moiety from GTP to Mo-molybdopterin (Mo-MPT) cofactor (Moco or molybdenum cofactor) to form Mo-molybdopterin guanine dinucleotide (Mo-MGD) cofactor. This chain is Molybdenum cofactor guanylyltransferase, found in Yersinia pestis bv. Antiqua (strain Antiqua).